Reading from the N-terminus, the 178-residue chain is Adenine phosphoribosyltransferase (178 aa).

It belongs to the purine/pyrimidine phosphoribosyltransferase family. As to quaternary structure, homodimer.

The protein resides in the cytoplasm. It carries out the reaction AMP + diphosphate = 5-phospho-alpha-D-ribose 1-diphosphate + adenine. Its pathway is purine metabolism; AMP biosynthesis via salvage pathway; AMP from adenine: step 1/1. In terms of biological role, catalyzes a salvage reaction resulting in the formation of AMP, that is energically less costly than de novo synthesis. This Cereibacter sphaeroides (strain ATCC 17029 / ATH 2.4.9) (Rhodobacter sphaeroides) protein is Adenine phosphoribosyltransferase.